The sequence spans 471 residues: MPAKGVIQEIIGVVIRAKFPEDEVPEIYNAIEIPLGNGDRLVCEVQQQLGNGVVKAVAMGSTDGLRRGLEVIDTGRPIAVPVGPATLGRVFNVLGDPIDGMGPIGPEVERRPIHRDPPSFEEQNTQAQIFETGIKVIDLIAPFTRGGKTAIFGGAGVGKTVVIQELIANIAKEQSGFSVFAGVGERSREGNDLIHEMKEARIDENTTVFDKTVMVFGQMNEPPGARLRVGLTALTMAEYFRDEGRDILLFIDNIFRFVQAGSEVSSLLGRMPSQVGYQPTLGTEMGELQERITSTKRGSITSMQAVYVPADDYTDPAPATVFSHLDATISLERSIAERAIFPAVDPLASTSRILDPNIVGEEHYRVAQEVKRVLQRYKDLKDIIAILGMEELSDEDKLTVQRARKIELFFSQPFTVAQQFTGRPGKYVPVKKTVESFARLLNGEGDHIPESFFYMQGDFDDVLAAYEASQK.

An ATP-binding site is contributed by 153–160 (GGAGVGKT).

The protein belongs to the ATPase alpha/beta chains family. F-type ATPases have 2 components, CF(1) - the catalytic core - and CF(0) - the membrane proton channel. CF(1) has five subunits: alpha(3), beta(3), gamma(1), delta(1), epsilon(1). CF(0) has four main subunits: a(1), b(1), b'(1) and c(9-12).

It localises to the cell membrane. It carries out the reaction ATP + H2O + 4 H(+)(in) = ADP + phosphate + 5 H(+)(out). Produces ATP from ADP in the presence of a proton gradient across the membrane. The catalytic sites are hosted primarily by the beta subunits. The protein is ATP synthase subunit beta of Chloroflexus aurantiacus (strain ATCC 29364 / DSM 637 / Y-400-fl).